The following is a 331-amino-acid chain: Ketol-acid reductoisomerase (NADP(+)) (331 aa).

Residues 2–182 (ARLYYDADAN…GGTRAGILET (181 aa)) form the KARI N-terminal Rossmann domain. Residues 25-28 (YGSQ), Ser51, Ser53, and 83-86 (DEVQ) each bind NADP(+). His108 is a catalytic residue. Gly134 is a binding site for NADP(+). Residues 183-328 (TFREETETDL…KDLRAMFSWT (146 aa)) enclose the KARI C-terminal knotted domain. Mg(2+) is bound by residues Asp191, Glu195, Glu227, and Glu231. Residue Ser252 participates in substrate binding.

This sequence belongs to the ketol-acid reductoisomerase family. The cofactor is Mg(2+).

It catalyses the reaction (2R)-2,3-dihydroxy-3-methylbutanoate + NADP(+) = (2S)-2-acetolactate + NADPH + H(+). It carries out the reaction (2R,3R)-2,3-dihydroxy-3-methylpentanoate + NADP(+) = (S)-2-ethyl-2-hydroxy-3-oxobutanoate + NADPH + H(+). The protein operates within amino-acid biosynthesis; L-isoleucine biosynthesis; L-isoleucine from 2-oxobutanoate: step 2/4. It functions in the pathway amino-acid biosynthesis; L-valine biosynthesis; L-valine from pyruvate: step 2/4. In terms of biological role, involved in the biosynthesis of branched-chain amino acids (BCAA). Catalyzes an alkyl-migration followed by a ketol-acid reduction of (S)-2-acetolactate (S2AL) to yield (R)-2,3-dihydroxy-isovalerate. In the isomerase reaction, S2AL is rearranged via a Mg-dependent methyl migration to produce 3-hydroxy-3-methyl-2-ketobutyrate (HMKB). In the reductase reaction, this 2-ketoacid undergoes a metal-dependent reduction by NADPH to yield (R)-2,3-dihydroxy-isovalerate. The protein is Ketol-acid reductoisomerase (NADP(+)) of Acaryochloris marina (strain MBIC 11017).